Consider the following 534-residue polypeptide: Glucomannan 4-beta-mannosyltransferase 2 (534 aa).

Residues 36–56 (VIVPLLQLAVYICLLMSVMLL) traverse the membrane as a helical segment. Aspartate 136 is an active-site residue. Substrate is bound by residues aspartate 195 and aspartate 197. Aspartate 289 is a catalytic residue. A run of 4 helical transmembrane segments spans residues 368–388 (IIAHWVTFCFYCVVLPLTILV), 404–426 (IITILNSVGTPRSIHLLFYWILF), 483–503 (LNTLELGFAAFLFVCGCYDFV), and 509–529 (YFIYLFLQTMSFFISGLGWIG).

The protein belongs to the glycosyltransferase 2 family. Plant cellulose synthase-like A subfamily.

The protein localises to the golgi apparatus membrane. It catalyses the reaction GDP-mannose + (glucomannan)n = GDP + (glucomannan)n+1.. Functionally, possesses glucomannan synthase and mannan synthase activities in vitro. Mannan synthase consists of a 4-beta-mannosyltransferase activity on mannan using GDP-mannose. The beta-1,4-mannan product is the backbone for galactomannan synthesis by galactomannan galactosyltransferase. Galactomannan is a noncellulosic polysaccharides of plant cell wall. In Arabidopsis thaliana (Mouse-ear cress), this protein is Glucomannan 4-beta-mannosyltransferase 2.